Reading from the N-terminus, the 495-residue chain is WD repeat-containing protein 37 (495 aa).

Residues 1 to 34 (MPTESGSWAAARQTKQKRKSHSLSIKRTNSSEQD) form a disordered region. The segment covering 22–31 (SLSIKRTNSS) has biased composition (polar residues). WD repeat units lie at residues 154–194 (GHRD…CLIK) and 197–236 (GHAG…PTPQ). The tract at residues 237 to 268 (PMADTSQISGEEEVDFSDKDENDGDGDASSDC) is disordered. A compositionally biased stretch (acidic residues) spans 246–264 (GEEEVDFSDKDENDGDGDA). 5 WD repeats span residues 280-319 (SHQG…LVHS), 322-361 (GHDQ…IHSV), 366-404 (GHTD…SPIA), 407-446 (RTDS…LARL), and 453-494 (GHRR…LLQE).

It is found in the cytoplasm. It localises to the nucleus. The sequence is that of WD repeat-containing protein 37 (wdr37) from Xenopus laevis (African clawed frog).